Reading from the N-terminus, the 259-residue chain is 4-hydroxy-tetrahydrodipicolinate reductase (259 aa).

NAD(+) is bound by residues 9–14 (GAGGRM) and Glu-35. Arg-36 provides a ligand contact to NADP(+). Residues 92–94 (GTT) and 116–119 (APNM) each bind NAD(+). His-149 serves as the catalytic Proton donor/acceptor. (S)-2,3,4,5-tetrahydrodipicolinate is bound at residue His-150. Residue Lys-153 is the Proton donor of the active site. 159–160 (GT) provides a ligand contact to (S)-2,3,4,5-tetrahydrodipicolinate.

It belongs to the DapB family.

The protein resides in the cytoplasm. It catalyses the reaction (S)-2,3,4,5-tetrahydrodipicolinate + NAD(+) + H2O = (2S,4S)-4-hydroxy-2,3,4,5-tetrahydrodipicolinate + NADH + H(+). The catalysed reaction is (S)-2,3,4,5-tetrahydrodipicolinate + NADP(+) + H2O = (2S,4S)-4-hydroxy-2,3,4,5-tetrahydrodipicolinate + NADPH + H(+). It functions in the pathway amino-acid biosynthesis; L-lysine biosynthesis via DAP pathway; (S)-tetrahydrodipicolinate from L-aspartate: step 4/4. Functionally, catalyzes the conversion of 4-hydroxy-tetrahydrodipicolinate (HTPA) to tetrahydrodipicolinate. The polypeptide is 4-hydroxy-tetrahydrodipicolinate reductase (Oleidesulfovibrio alaskensis (strain ATCC BAA-1058 / DSM 17464 / G20) (Desulfovibrio alaskensis)).